Here is a 235-residue protein sequence, read N- to C-terminus: 7-carboxy-7-deazaguanine synthase (235 aa).

Substrate contacts are provided by residues 27–29 (LQG) and Arg42. The Radical SAM core domain occupies 33-235 (FSGQPSVFVR…VQVHKILKIA (203 aa)). Positions 46, 50, and 53 each coordinate [4Fe-4S] cluster. A Mg(2+)-binding site is contributed by Thr55. Thr87 is a binding site for substrate. S-adenosyl-L-methionine is bound by residues Gly89 and 133 to 135 (SPK).

The protein belongs to the radical SAM superfamily. 7-carboxy-7-deazaguanine synthase family. As to quaternary structure, homodimer. [4Fe-4S] cluster serves as cofactor. Requires S-adenosyl-L-methionine as cofactor. Mg(2+) is required as a cofactor.

The catalysed reaction is 6-carboxy-5,6,7,8-tetrahydropterin + H(+) = 7-carboxy-7-deazaguanine + NH4(+). Its pathway is purine metabolism; 7-cyano-7-deazaguanine biosynthesis. Functionally, catalyzes the complex heterocyclic radical-mediated conversion of 6-carboxy-5,6,7,8-tetrahydropterin (CPH4) to 7-carboxy-7-deazaguanine (CDG), a step common to the biosynthetic pathways of all 7-deazapurine-containing compounds. This Rhodospirillum rubrum (strain ATCC 11170 / ATH 1.1.1 / DSM 467 / LMG 4362 / NCIMB 8255 / S1) protein is 7-carboxy-7-deazaguanine synthase.